The sequence spans 453 residues: Putative folate transporter 2 (453 aa).

Transmembrane regions (helical) follow at residues 41 to 64 (IVVY…YYLF), 76 to 96 (SLIL…ALIT), 108 to 126 (PYLF…SLAL), 132 to 156 (IQAT…EALV), 176 to 195 (IASK…YFLE), 201 to 220 (YIFM…CLFL), 241 to 260 (FINT…YMSG), 280 to 300 (SFMG…IIVY), 312 to 330 (TLIF…PIIL), 346 to 366 (VLSG…PLFI), and 416 to 437 (LSMY…VPLL).

It belongs to the major facilitator superfamily. Folate-biopterin transporter (TC 2.A.71) family.

The protein localises to the plastid. It is found in the apicoplast. It localises to the membrane. Its function is as follows. Putative folate transporter. Required for sporogony of malaria parasites and host switching. The polypeptide is Putative folate transporter 2 (Plasmodium berghei (strain Anka)).